The sequence spans 296 residues: MGPTASGKTALALELAEKHNCEIISVDSALIYRGMDIGSAKPSAEELARGPHRLIDIRDPAESYSAADFRADALREIEQIISMGKTPVLVGGTMMYFKALLEGLSPLPSADEAIRAEIQAEADANGWEALHEQLREIDPVSAERIHPNDPQRLSRAIEVYRISGKSLTELTQTKSAPLPYDVVQFAIAPRERKVLHELIGQRFRIMLEQGFIDEVAQLKARGDLHLDLPSMRCVGYRQCWQYLDGEFDYDTMVEKAVAATRQLAKRQLTWLRSWPELNWLESGAEGNLVTLMRQCR.

2–9 serves as a coordination point for ATP; the sequence is GPTASGKT. Position 4-9 (4-9) interacts with substrate; sequence TASGKT. Interaction with substrate tRNA regions lie at residues 27-30, 151-155, and 232-237; these read DSAL, QRLSR, and RCVGYR.

The protein belongs to the IPP transferase family. In terms of assembly, monomer. Mg(2+) is required as a cofactor.

The enzyme catalyses adenosine(37) in tRNA + dimethylallyl diphosphate = N(6)-dimethylallyladenosine(37) in tRNA + diphosphate. In terms of biological role, catalyzes the transfer of a dimethylallyl group onto the adenine at position 37 in tRNAs that read codons beginning with uridine, leading to the formation of N6-(dimethylallyl)adenosine (i(6)A). In Shewanella sp. (strain ANA-3), this protein is tRNA dimethylallyltransferase.